We begin with the raw amino-acid sequence, 76 residues long: uncharacterized protein (76 aa).

Positions 1–24 (MPLRLCQGRKDRASDPVRDDGSPP) are disordered. A compositionally biased stretch (basic and acidic residues) spans 8 to 22 (GRKDRASDPVRDDGS).

This is an uncharacterized protein from Dryophytes versicolor (chameleon treefrog).